Reading from the N-terminus, the 221-residue chain is Histidine biosynthesis bifunctional protein HisIE (221 aa).

The phosphoribosyl-AMP cyclohydrolase stretch occupies residues 1–121 (MNITKIDWQK…KKQQFANWAW (121 aa)). The segment at 122 to 221 (FIKLEQHLKE…IGLHPEGGNK (100 aa)) is phosphoribosyl-ATP pyrophosphohydrolase.

It in the N-terminal section; belongs to the PRA-CH family. The protein in the C-terminal section; belongs to the PRA-PH family.

The protein resides in the cytoplasm. It carries out the reaction 1-(5-phospho-beta-D-ribosyl)-ATP + H2O = 1-(5-phospho-beta-D-ribosyl)-5'-AMP + diphosphate + H(+). The catalysed reaction is 1-(5-phospho-beta-D-ribosyl)-5'-AMP + H2O = 1-(5-phospho-beta-D-ribosyl)-5-[(5-phospho-beta-D-ribosylamino)methylideneamino]imidazole-4-carboxamide. It participates in amino-acid biosynthesis; L-histidine biosynthesis; L-histidine from 5-phospho-alpha-D-ribose 1-diphosphate: step 2/9. Its pathway is amino-acid biosynthesis; L-histidine biosynthesis; L-histidine from 5-phospho-alpha-D-ribose 1-diphosphate: step 3/9. The chain is Histidine biosynthesis bifunctional protein HisIE (hisI) from Haemophilus influenzae (strain ATCC 51907 / DSM 11121 / KW20 / Rd).